The primary structure comprises 571 residues: Proline--tRNA ligase (571 aa).

It belongs to the class-II aminoacyl-tRNA synthetase family. ProS type 1 subfamily. As to quaternary structure, homodimer.

It is found in the cytoplasm. It carries out the reaction tRNA(Pro) + L-proline + ATP = L-prolyl-tRNA(Pro) + AMP + diphosphate. In terms of biological role, catalyzes the attachment of proline to tRNA(Pro) in a two-step reaction: proline is first activated by ATP to form Pro-AMP and then transferred to the acceptor end of tRNA(Pro). As ProRS can inadvertently accommodate and process non-cognate amino acids such as alanine and cysteine, to avoid such errors it has two additional distinct editing activities against alanine. One activity is designated as 'pretransfer' editing and involves the tRNA(Pro)-independent hydrolysis of activated Ala-AMP. The other activity is designated 'posttransfer' editing and involves deacylation of mischarged Ala-tRNA(Pro). The misacylated Cys-tRNA(Pro) is not edited by ProRS. The chain is Proline--tRNA ligase from Pasteurella multocida (strain Pm70).